The chain runs to 430 residues: Endochitinase 46 (430 aa).

The first 22 residues, Met1–Ala22, serve as a signal peptide directing secretion. A propeptide spanning residues Ser23–Arg35 is cleaved from the precursor. Residues Tyr39–Leu408 form the GH18 domain. Residues Gly103–Thr104 and Gly130–Thr133 each bind chitin. The Proton donor role is filled by Glu172. Tyr173 lines the chitin pocket. The N-linked (GlcNAc...) asparagine glycan is linked to Asn219. Chitin is bound by residues Met238 to Asp241 and Trp385.

Belongs to the glycosyl hydrolase 18 family. Chitinase class V subfamily.

The protein localises to the secreted. It carries out the reaction Random endo-hydrolysis of N-acetyl-beta-D-glucosaminide (1-&gt;4)-beta-linkages in chitin and chitodextrins.. In terms of biological role, secreted chitinase involved in the degradation of chitin, a component of the cell walls of fungi and exoskeletal elements of some animals (including worms and arthropods). Plays a morphogenetic role during apical growth, cell division and differentiation (cell wall morphogenesis). Also acts as an antifungal agent. Involved in the degradation and further assimilation of phytopathogenic fungi, namely mycoparasitism, the major mechanism accounting for the antagonistic activity against phytopathogenic fungi displayed by Trichoderma. In Trichoderma harzianum (Hypocrea lixii), this protein is Endochitinase 46 (chit46).